The chain runs to 217 residues: Thiamine-phosphate synthase (217 aa).

4-amino-2-methyl-5-(diphosphooxymethyl)pyrimidine is bound by residues 42–46 and Asp-77; that span reads QYRDK. Residues Asp-78 and Asp-97 each coordinate Mg(2+). Ser-116 is a 4-amino-2-methyl-5-(diphosphooxymethyl)pyrimidine binding site. 143 to 145 contacts 2-[(2R,5Z)-2-carboxy-4-methylthiazol-5(2H)-ylidene]ethyl phosphate; sequence TTS. Residue Lys-146 coordinates 4-amino-2-methyl-5-(diphosphooxymethyl)pyrimidine. Residues Gly-174 and 194 to 195 each bind 2-[(2R,5Z)-2-carboxy-4-methylthiazol-5(2H)-ylidene]ethyl phosphate; that span reads IS.

This sequence belongs to the thiamine-phosphate synthase family. Mg(2+) is required as a cofactor.

It catalyses the reaction 2-[(2R,5Z)-2-carboxy-4-methylthiazol-5(2H)-ylidene]ethyl phosphate + 4-amino-2-methyl-5-(diphosphooxymethyl)pyrimidine + 2 H(+) = thiamine phosphate + CO2 + diphosphate. The enzyme catalyses 2-(2-carboxy-4-methylthiazol-5-yl)ethyl phosphate + 4-amino-2-methyl-5-(diphosphooxymethyl)pyrimidine + 2 H(+) = thiamine phosphate + CO2 + diphosphate. The catalysed reaction is 4-methyl-5-(2-phosphooxyethyl)-thiazole + 4-amino-2-methyl-5-(diphosphooxymethyl)pyrimidine + H(+) = thiamine phosphate + diphosphate. The protein operates within cofactor biosynthesis; thiamine diphosphate biosynthesis; thiamine phosphate from 4-amino-2-methyl-5-diphosphomethylpyrimidine and 4-methyl-5-(2-phosphoethyl)-thiazole: step 1/1. Its function is as follows. Condenses 4-methyl-5-(beta-hydroxyethyl)thiazole monophosphate (THZ-P) and 2-methyl-4-amino-5-hydroxymethyl pyrimidine pyrophosphate (HMP-PP) to form thiamine monophosphate (TMP). This chain is Thiamine-phosphate synthase, found in Lactiplantibacillus plantarum (strain ATCC BAA-793 / NCIMB 8826 / WCFS1) (Lactobacillus plantarum).